A 232-amino-acid chain; its full sequence is 2,3,4,5-tetrahydropyridine-2,6-dicarboxylate N-acetyltransferase (232 aa).

The protein belongs to the transferase hexapeptide repeat family. DapH subfamily.

It carries out the reaction (S)-2,3,4,5-tetrahydrodipicolinate + acetyl-CoA + H2O = L-2-acetamido-6-oxoheptanedioate + CoA. Its pathway is amino-acid biosynthesis; L-lysine biosynthesis via DAP pathway; LL-2,6-diaminopimelate from (S)-tetrahydrodipicolinate (acetylase route): step 1/3. Functionally, catalyzes the transfer of an acetyl group from acetyl-CoA to tetrahydrodipicolinate. In Streptococcus pneumoniae (strain CGSP14), this protein is 2,3,4,5-tetrahydropyridine-2,6-dicarboxylate N-acetyltransferase.